Consider the following 325-residue polypeptide: ATP phosphoribosyltransferase (325 aa).

This sequence belongs to the ATP phosphoribosyltransferase family. Long subfamily. The cofactor is Mg(2+).

Its subcellular location is the cytoplasm. It carries out the reaction 1-(5-phospho-beta-D-ribosyl)-ATP + diphosphate = 5-phospho-alpha-D-ribose 1-diphosphate + ATP. It functions in the pathway amino-acid biosynthesis; L-histidine biosynthesis; L-histidine from 5-phospho-alpha-D-ribose 1-diphosphate: step 1/9. Its activity is regulated as follows. Feedback inhibited by histidine. Catalyzes the condensation of ATP and 5-phosphoribose 1-diphosphate to form N'-(5'-phosphoribosyl)-ATP (PR-ATP). Has a crucial role in the pathway because the rate of histidine biosynthesis seems to be controlled primarily by regulation of HisG enzymatic activity. The sequence is that of ATP phosphoribosyltransferase from Bradyrhizobium sp. (strain ORS 278).